The primary structure comprises 524 residues: Butyrophilin subfamily 1 member A1 (524 aa).

Positions 1-26 (MAVPTNSCLLVCLLTLTVLQLPTLDS) are cleaved as a signal peptide. The Extracellular portion of the chain corresponds to 27 to 247 (AAPFDVTAPQ…APFVPRLTPW (221 aa)). Ig-like V-type domains are found at residues 29 to 141 (PFDV…VYLK) and 149 to 235 (PQIS…VEIS). Intrachain disulfides connect Cys51-Cys125 and Cys165-Cys219. N-linked (GlcNAc...) asparagine glycosylation is found at Asn56 and Asn216. The helical transmembrane segment at 248 to 268 (IVAVAIILLALGFLTIGSIFF) threads the bilayer. The Cytoplasmic segment spans residues 269 to 524 (TWKLYKERSS…IPFSPSQAAP (256 aa)). In terms of domain architecture, B30.2/SPRY spans 286–480 (SKERLLEELR…LTICSTANGP (195 aa)).

It belongs to the immunoglobulin superfamily. BTN/MOG family. In terms of assembly, seems to associate with xanthine dehydrogenase/oxidase. In terms of processing, N-glycosylated. Strongly expressed in lactating mammary tissue (at protein level). About 100-fold lower levels in virgin mammary tissue. Also detected in spleen and thymus at 10-20 times lower levels compared to those detected in virgin mammary gland. Very low levels in several other tissues, including brain, heart, kidney, lymph node, lung and small intestine. In the thymus, detected in the stroma, in epithelial cells (at protein level). Most prominent in medullary areas of the thymus and at the corticomedullary junction (at protein level).

Its subcellular location is the membrane. May function in the secretion of milk-fat droplets. May act as a specific membrane-associated receptor for the association of cytoplasmic droplets with the apical plasma membrane. Inhibits the proliferation of CD4 and CD8 T-cells activated by anti-CD3 antibodies, T-cell metabolism and IL2 and IFNG secretion. The polypeptide is Butyrophilin subfamily 1 member A1 (Btn1a1) (Mus musculus (Mouse)).